Consider the following 500-residue polypeptide: Farnesylcysteine lyase (500 aa).

The first 24 residues, Met-1–Gly-24, serve as a signal peptide directing secretion. 4 N-linked (GlcNAc...) asparagine glycosylation sites follow: Asn-56, Asn-113, Asn-211, and Asn-281.

Belongs to the prenylcysteine oxidase family. FAD serves as cofactor. In terms of tissue distribution, expressed in seedilings, flowers, stems, leaves and roots.

The protein resides in the lysosome. The catalysed reaction is S-(2E,6E)-farnesyl-L-cysteine + O2 + H2O = (2E,6E)-farnesal + L-cysteine + H2O2. In terms of biological role, involved in the degradation of prenylcysteine. Cleaves specifically the thioether bond of S-farnesyl-L-cysteine and has no activity with S-geranylgeranyl-L-cysteine. Also recognizes N-acetyl-farnesylcysteine and may have a role in deprenylation of farnesylated proteins. In Arabidopsis thaliana (Mouse-ear cress), this protein is Farnesylcysteine lyase.